Consider the following 285-residue polypeptide: Diaminopimelate epimerase (285 aa).

Residues Asn15 and Asn68 each coordinate substrate. Catalysis depends on Cys77, which acts as the Proton donor. Substrate-binding positions include 78-79 (GN), Asn165, Asn201, and 219-220 (ER). Cys228 serves as the catalytic Proton acceptor. 229 to 230 (GT) lines the substrate pocket.

It belongs to the diaminopimelate epimerase family. As to quaternary structure, homodimer.

The protein localises to the cytoplasm. The enzyme catalyses (2S,6S)-2,6-diaminopimelate = meso-2,6-diaminopimelate. Its pathway is amino-acid biosynthesis; L-lysine biosynthesis via DAP pathway; DL-2,6-diaminopimelate from LL-2,6-diaminopimelate: step 1/1. Its function is as follows. Catalyzes the stereoinversion of LL-2,6-diaminopimelate (L,L-DAP) to meso-diaminopimelate (meso-DAP), a precursor of L-lysine and an essential component of the bacterial peptidoglycan. This chain is Diaminopimelate epimerase, found in Synechococcus sp. (strain JA-2-3B'a(2-13)) (Cyanobacteria bacterium Yellowstone B-Prime).